Reading from the N-terminus, the 614-residue chain is Vitamin B12 transporter BtuB (614 aa).

A signal peptide spans 1-20 (MIKKASLLTACSVTAFSAWA). A TonB box motif is present at residues 26–33 (DTLVVTAN). Residues 38-152 (PRSTVLAPTT…IGGVVNIITT (115 aa)) enclose the TBDR plug domain. Residues L83, S85, N92, and 110-111 (VS) contribute to the cyanocob(III)alamin site. A TBDR beta-barrel domain is found at 155–614 (EPGTEISAGW…EYTLSGSYTF (460 aa)). The next 3 beta stranded transmembrane spans lie at 158–165 (TEISAGWG), 169–178 (YQNYDVSTQQ), and 184–195 (TRVTLLGDYAHT). The Ca(2+) site is built by D199, Q211, D213, and D215. The next 2 membrane-spanning stretches (beta stranded) occupy residues 217-227 (FLSKTLYGALE) and 232-248 (DAWS…NRTN). Residues Y249 and D250 each contribute to the Ca(2+) site. A251 contacts cyanocob(III)alamin. D261 lines the Ca(2+) pocket. 14 beta stranded membrane-spanning segments follow: residues 263-277 (RKLY…LRYN), 279-296 (ELIK…KDYN), 309-325 (TLDE…NNII), 328-337 (HGNVGAGVDW), 353-369 (YDQR…QQVG), 371-381 (FTFEGAARSDD), 385-400 (FGRH…WEFI), 403-417 (YRFI…KAPN), 434-443 (KSKQWEGAFE), 449-458 (VNWRISGYRN), 473-490 (YYNE…TANF), 494-509 (PLTH…ARNA), 517-529 (RRAK…QLDW), and 535-550 (DWGI…YDKD). Position 309 (T309) interacts with cyanocob(III)alamin. Position 517 (R517) interacts with cyanocob(III)alamin. Y551 contacts cyanocob(III)alamin. 3 beta stranded membrane-spanning segments follow: residues 558-572 (TVKM…LAVA), 585-596 (IANLFDKDYETV), and 602-614 (AGRE…SYTF). Residues 597–614 (YGYQTAGREYTLSGSYTF) carry the TonB C-terminal box motif.

Belongs to the TonB-dependent receptor family. BtuB (TC 1.B.14.3.1) subfamily.

Its subcellular location is the cell outer membrane. In terms of biological role, involved in the active translocation of vitamin B12 (cyanocobalamin) across the outer membrane to the periplasmic space. It derives its energy for transport by interacting with the trans-periplasmic membrane protein TonB. In Shigella dysenteriae serotype 1 (strain Sd197), this protein is Vitamin B12 transporter BtuB.